Consider the following 391-residue polypeptide: Elongation factor Tu (391 aa).

In terms of domain architecture, tr-type G spans 10 to 201 (KPHVNIGTIG…AVDEYIPTPA (192 aa)). The tract at residues 19–26 (GHVDHGKT) is G1. 19-26 (GHVDHGKT) contributes to the GTP binding site. Residue T26 coordinates Mg(2+). Residues 55-59 (GITIS) form a G2 region. The G3 stretch occupies residues 76-79 (DCPG). GTP-binding positions include 76–80 (DCPGH) and 131–134 (NKVD). A G4 region spans residues 131-134 (NKVD). Residues 169–171 (SAL) form a G5 region.

Belongs to the TRAFAC class translation factor GTPase superfamily. Classic translation factor GTPase family. EF-Tu/EF-1A subfamily. As to quaternary structure, monomer.

It localises to the cytoplasm. The enzyme catalyses GTP + H2O = GDP + phosphate + H(+). In terms of biological role, GTP hydrolase that promotes the GTP-dependent binding of aminoacyl-tRNA to the A-site of ribosomes during protein biosynthesis. The polypeptide is Elongation factor Tu (Jannaschia sp. (strain CCS1)).